The sequence spans 801 residues: Protein 4.1 (801 aa).

Positions 1 to 187 are disordered; sequence MTTEKGLLAE…GESKASHKVV (187 aa). Over residues 45–58 the composition is skewed to low complexity; it reads EQSQESPSTTSPST. Residues 88-107 show a composition bias toward basic and acidic residues; sequence SDEKEVELLGEKGQDQKDVD. The span at 108 to 117 shows a compositional bias: acidic residues; it reads EGLGEQLEDD. Over residues 141–151 the composition is skewed to polar residues; sequence SLSSAETQPAQ. Positions 154–166 are enriched in acidic residues; that stretch reads QKEDQDPEADCED. The span at 167–182 shows a compositional bias: basic and acidic residues; the sequence is VEGKEPIKKPEGESKA. One can recognise an FERM domain in the interval 193 to 474; it reads MRCKVTLLDD…EHHTFFRLTS (282 aa). The tract at residues 477–587 is hydrophilic; that stretch reads SIPKHRFLSL…GMPNQRESPK (111 aa). The tract at residues 516-613 is disordered; sequence RTGSKRASRS…DKVKDLEKTQ (98 aa). A compositionally biased stretch (basic and acidic residues) spans 563–577; sequence RVEEMPKKTEEKPKE. A spectrin--actin-binding region spans residues 588–651; sequence DVKATQQDSP…WDKRLSTHSP (64 aa). The span at 591-601 shows a compositional bias: polar residues; sequence ATQQDSPSPTV. The span at 604 to 613 shows a compositional bias: basic and acidic residues; the sequence is DKVKDLEKTQ. Positions 653–801 are C-terminal (CTD); sequence RTLSFNGQVQ…GVVHQETEIA (149 aa).

As to quaternary structure, binds with a high affinity to glycophorin and with lower affinity to band III protein. Associates with the nuclear mitotic apparatus. Binds calmodulin. Post-translationally, phosphorylated at multiple sites by different protein kinases and each phosphorylation event selectively modulates the protein's functions. Found exclusively in photoreceptors following the terminal mitosis of retinal neurons. When retinal synaptogenesis is complete, protein 4.1 is also expressed in the inner retina. In adult amphibian retinas, protein 4.1 is detected in photoreceptors, bipolar cells, and ganglion cell axons.

Its subcellular location is the nucleus. The protein resides in the cytoplasm. It is found in the cytoskeleton. It localises to the cell cortex. In terms of biological role, protein 4.1 is a major structural element of the erythrocyte membrane skeleton. It plays a key role in regulating membrane physical properties of mechanical stability and deformability by stabilizing spectrin-actin interaction. May be required for dynein-dynactin complex and NUMA1 recruitment at the mitotic cell cortex during anaphase. The protein is Protein 4.1 of Xenopus laevis (African clawed frog).